An 883-amino-acid polypeptide reads, in one-letter code: Alanine--tRNA ligase (883 aa).

Positions 560, 564, 665, and 669 each coordinate Zn(2+).

It belongs to the class-II aminoacyl-tRNA synthetase family. Zn(2+) is required as a cofactor.

It is found in the cytoplasm. The enzyme catalyses tRNA(Ala) + L-alanine + ATP = L-alanyl-tRNA(Ala) + AMP + diphosphate. Catalyzes the attachment of alanine to tRNA(Ala) in a two-step reaction: alanine is first activated by ATP to form Ala-AMP and then transferred to the acceptor end of tRNA(Ala). Also edits incorrectly charged Ser-tRNA(Ala) and Gly-tRNA(Ala) via its editing domain. The polypeptide is Alanine--tRNA ligase (Mesomycoplasma hyopneumoniae (strain 232) (Mycoplasma hyopneumoniae)).